We begin with the raw amino-acid sequence, 360 residues long: Methylthioribose-1-phosphate isomerase (360 aa).

Aspartate 252 (proton donor) is an active-site residue.

This sequence belongs to the eIF-2B alpha/beta/delta subunits family. MtnA subfamily.

The protein resides in the cytoplasm. Its subcellular location is the nucleus. The catalysed reaction is 5-(methylsulfanyl)-alpha-D-ribose 1-phosphate = 5-(methylsulfanyl)-D-ribulose 1-phosphate. It functions in the pathway amino-acid biosynthesis; L-methionine biosynthesis via salvage pathway; L-methionine from S-methyl-5-thio-alpha-D-ribose 1-phosphate: step 1/6. Catalyzes the interconversion of methylthioribose-1-phosphate (MTR-1-P) into methylthioribulose-1-phosphate (MTRu-1-P). This is Methylthioribose-1-phosphate isomerase from Trichoplax adhaerens (Trichoplax reptans).